We begin with the raw amino-acid sequence, 724 residues long: Disks large homolog 4 (724 aa).

Residues cysteine 3 and cysteine 5 are each lipidated (S-palmitoyl cysteine). Residues glutamine 15–serine 35 form a disordered region. PDZ domains lie at glutamate 65–arginine 151 and glutamate 160–proline 246. Serine 73 and serine 142 each carry phosphoserine. Tyrosine 240 bears the Phosphotyrosine mark. Serine 295 bears the Phosphoserine mark. The region spanning arginine 313–lysine 393 is the PDZ 3 domain. 2 positions are modified to phosphoserine: serine 415 and serine 418. Threonine 420 is subject to Phosphothreonine. Phosphoserine occurs at positions 422, 425, 449, and 480. Residues lysine 428–glutamate 498 form the SH3 domain. A Guanylate kinase-like domain is found at alanine 534–glutamate 709. The residue at position 580 (tyrosine 580) is a Phosphotyrosine. A phosphoserine mark is found at serine 606 and serine 654. Residue tyrosine 715 is modified to Phosphotyrosine.

Belongs to the MAGUK family. In terms of assembly, interacts through its PDZ domains with ANO2 and NETO1. Interacts through its first two PDZ domains with GRIN2A, GRIN2B, GRIN2C, GRIN2D. Interacts with ASIC3. Interacts with SEMA4C. Interacts with CXADR. Interacts with KCND2. Interacts with SYNGAP1. Interacts with LRRC4 and LRRC4B. Interacts with ERBB4. Interacts with KCNA1, KCNA2, KCNA3 and KCNA4. Interacts through its first PDZ domain with GRIK2, KCNA4 and CRIPT. Interacts through its second PDZ domain with the PDZ domain of NOS1 or the C-terminus of CAPON. Interacts through its third PDZ domain with NLGN1 and CRIPT, and probably with NLGN2 and NLGN3. Interacts through its guanylate kinase-like domain with KIF13B. Interacts through its guanylate kinase-like domain with DLGAP1/GKAP, DLGAP2, DLGAP3, DLGAP4, MAP1A, BEGAIN and SIPA1L1. Isoform 2 interacts through an L27 domain with HGS/HRS and the first L27 domain of CASK. Interacts with ADR1B and ANKS1B. May interact with HTR2A. Interacts with ADAM22. Interacts with KLHL17 and LGI1. Interacts with FRMPD4 (via C-terminus). Interacts with LRFN1, LRFN2 and LRFN4. Interacts (via N-terminal tandem pair of PDZ domains) with GPER1 (via C-terminus tail motif); the interaction is direct and induces the increase of GPER1 protein levels residing at the plasma membrane surface in a estradiol-independent manner. Interacts (via N-terminus tandem pair of PDZ domains) with NOS1 (via N-terminal domain). Interacts with SHANK3. Interacts with KCNJ4. Interacts with GPR85. Interacts with CACNG2 and MPP2 (via the SH3-Guanylate kinase-like sub-module). Interacts with ADGRB1. Found in a complex with PRR7 and GRIN1. Interacts (via PDZ3 domain and to lesser degree via PDZ2 domain) with PRR7. Component of the postsynaptic hippocampal AMPA-type glutamate receptor (AMPAR) complex, at least composed of pore forming AMPAR subunits GRIA1, GRIA2 and GRIA3 and AMPAR auxiliary proteins SHISA6 and SHISA7. Interacts (via its first two PDZ domains) with SHISA6 and SHISA7 (via PDZ-binding motif); the interaction is direct. Interacts with RPH3A and GRIN2A; this ternary complex regulates NMDA receptor composition at postsynaptic membranes. Interacts with ABR and BCR. Interacts with DGKI (via PDZ-binding motif); controls the localization of DGKI to the synapse. Interacts with C9orf72, SMCR8 and RAB39B. Interacts with ZDHHC5. Interacts with PTEN (via PDZ domain-binding motif); the interaction is induced by NMDA and is required for PTEN location at postsynaptic density. Found in a complex with GRIA1, GRIA2, GRIA3, GRIA4, CACNG8 and CNIH2. Interacts with FAM81A; the interaction facilitates condensate formation via liquid-liquid phase separation. Interacts with ADGRL3. Interacts with SORCS3. Palmitoylated. Palmitoylation is required for targeting to postsynaptic density, plasma membrane and synapses. Palmitoylation by ZDHHC2 occurs when the synaptic activity decreases and induces DLG4 synaptic clustering. Palmitoylation by ZDHHC15 regulates trafficking to the postsynaptic density and function in synaptogenesis. Palmitoylation may play a role in glutamate receptor GRIA1 synapse clustering. Depalmitoylated by ABHD17A and ABHD17B and to a lesser extent by ABHD17C, ABHD12, ABHD13, LYPLA1 and LYPLA2. Undergoes rapid synaptic palmitoylation/depalmitoylation cycles during neuronal development which slow down in mature neurons. Post-translationally, ubiquitinated by MDM2 in response to NMDA receptor activation, leading to proteasome-mediated degradation of DLG4 which is required for AMPA receptor endocytosis. Brain.

It localises to the cell membrane. The protein resides in the postsynaptic density. The protein localises to the synapse. Its subcellular location is the cytoplasm. It is found in the cell projection. It localises to the axon. The protein resides in the dendritic spine. The protein localises to the dendrite. Its subcellular location is the presynapse. In terms of biological role, postsynaptic scaffolding protein that plays a critical role in synaptogenesis and synaptic plasticity by providing a platform for the postsynaptic clustering of crucial synaptic proteins. Interacts with the cytoplasmic tail of NMDA receptor subunits and shaker-type potassium channels. Required for synaptic plasticity associated with NMDA receptor signaling. Overexpression or depletion of DLG4 changes the ratio of excitatory to inhibitory synapses in hippocampal neurons. May reduce the amplitude of ASIC3 acid-evoked currents by retaining the channel intracellularly. May regulate the intracellular trafficking of ADR1B. Also regulates AMPA-type glutamate receptor (AMPAR) immobilization at postsynaptic density keeping the channels in an activated state in the presence of glutamate and preventing synaptic depression. Under basal conditions, cooperates with FYN to stabilize palmitoyltransferase ZDHHC5 at the synaptic membrane through FYN-mediated phosphorylation of ZDHHC5 and its subsequent inhibition of association with endocytic proteins. This Homo sapiens (Human) protein is Disks large homolog 4.